The chain runs to 200 residues: Probable nicotinate-nucleotide adenylyltransferase (200 aa).

The protein belongs to the NadD family.

The catalysed reaction is nicotinate beta-D-ribonucleotide + ATP + H(+) = deamido-NAD(+) + diphosphate. The protein operates within cofactor biosynthesis; NAD(+) biosynthesis; deamido-NAD(+) from nicotinate D-ribonucleotide: step 1/1. In terms of biological role, catalyzes the reversible adenylation of nicotinate mononucleotide (NaMN) to nicotinic acid adenine dinucleotide (NaAD). In Lachnoclostridium phytofermentans (strain ATCC 700394 / DSM 18823 / ISDg) (Clostridium phytofermentans), this protein is Probable nicotinate-nucleotide adenylyltransferase.